A 126-amino-acid chain; its full sequence is Protein ApaG (126 aa).

Residues 2–126 enclose the ApaG domain; sequence SDSRYKVDVS…FRLAVPGSLH (125 aa).

The chain is Protein ApaG from Pseudomonas syringae pv. tomato (strain ATCC BAA-871 / DC3000).